The chain runs to 949 residues: Translation initiation factor IF-2 (949 aa).

3 disordered regions span residues 61-122 (IQAN…PIIK), 139-159 (VENT…QKLQ), and 171-284 (LTQS…NKSH). Basic and acidic residues-rich tracts occupy residues 112–122 (KKKEAPAPIIK) and 150–159 (QIEKAKQKLQ). Over residues 174 to 190 (SNTNTTNNANSASNVSN) the composition is skewed to low complexity. Over residues 191 to 208 (AKKEISEVKKQEQEIKRH) the composition is skewed to basic and acidic residues. Residues 209 to 220 (ENIKRRTGFRVI) show a composition bias toward basic residues. Positions 249 to 264 (EDIKKEWQEKDKQETK) are enriched in basic and acidic residues. Residues 448 to 617 (ERPPVVTIMG…LIQADIMELK (170 aa)) form the tr-type G domain. Positions 457–464 (GHVDHGKT) are G1. 457-464 (GHVDHGKT) lines the GTP pocket. The tract at residues 482–486 (GITQH) is G2. A G3 region spans residues 503–506 (DTPG). GTP is bound by residues 503-507 (DTPGH) and 557-560 (NKMD). Residues 557 to 560 (NKMD) form a G4 region. The tract at residues 593–595 (SAK) is G5.

It belongs to the TRAFAC class translation factor GTPase superfamily. Classic translation factor GTPase family. IF-2 subfamily.

It is found in the cytoplasm. In terms of biological role, one of the essential components for the initiation of protein synthesis. Protects formylmethionyl-tRNA from spontaneous hydrolysis and promotes its binding to the 30S ribosomal subunits. Also involved in the hydrolysis of GTP during the formation of the 70S ribosomal complex. This chain is Translation initiation factor IF-2 (infB), found in Helicobacter pylori (strain J99 / ATCC 700824) (Campylobacter pylori J99).